The following is a 214-amino-acid chain: Pyridoxine/pyridoxamine 5'-phosphate oxidase (214 aa).

Substrate is bound by residues arginine 9–tyrosine 12 and lysine 67. Residues arginine 62 to lysine 67, phenylalanine 77 to threonine 78, lysine 84, and glutamine 106 contribute to the FMN site. Positions 124, 128, and 132 each coordinate substrate. Residues glutamine 141 to serine 142 and tryptophan 186 contribute to the FMN site. Position 192–194 (arginine 192–histidine 194) interacts with substrate. Arginine 196 is a binding site for FMN.

The protein belongs to the pyridoxamine 5'-phosphate oxidase family. As to quaternary structure, homodimer. Requires FMN as cofactor.

It carries out the reaction pyridoxamine 5'-phosphate + O2 + H2O = pyridoxal 5'-phosphate + H2O2 + NH4(+). It catalyses the reaction pyridoxine 5'-phosphate + O2 = pyridoxal 5'-phosphate + H2O2. Its pathway is cofactor metabolism; pyridoxal 5'-phosphate salvage; pyridoxal 5'-phosphate from pyridoxamine 5'-phosphate: step 1/1. The protein operates within cofactor metabolism; pyridoxal 5'-phosphate salvage; pyridoxal 5'-phosphate from pyridoxine 5'-phosphate: step 1/1. In terms of biological role, catalyzes the oxidation of either pyridoxine 5'-phosphate (PNP) or pyridoxamine 5'-phosphate (PMP) into pyridoxal 5'-phosphate (PLP). This chain is Pyridoxine/pyridoxamine 5'-phosphate oxidase, found in Microcystis aeruginosa (strain NIES-843 / IAM M-2473).